Reading from the N-terminus, the 484-residue chain is MKKNFILNFATKNVKEKKLSFGVGITLWALIVFAYMIFVMNWGFASAGLNGKAGISGYLGHFFPNANEAPGTVVNQAVNWGITIGRGIGSVLVGWLIVKISHKYTVILSLFFMLFGIIAPYSPTYAGFIILRTIFAIGGTMQIILIQPVVSNYLNQRQKAVISQFSPFFYPIGTIITLIPFAGIIGQEAQEAFRDNWQIVFLVIGLLTLIPLIGYIILGTKFDLYPSNIEKRNKQEKLSLATFFKQKDTWYWTILYGSWLVAVVFPFTFSKPIFHRLIGDSDGTFNDKISVFLIFFLAGMFLGPFTIGLLSKYQLQRRKYISTIITLGVFFYVLATVVFVLKVGKNYEYAKSYTDGWTWLFLFLGLFMGICLWGIQGVMLNLPHEYKGSNPYRVGFQFGLIWGLGYTAFTIATIITSLVNTPPGIDLKKLELNNVDGYALGAYILIIIFSLVSSIGLALLKEPNPEYKKLLKIRSFSEIERIKK.

12 helical membrane-spanning segments follow: residues 19–39 (LSFG…MIFV), 78–98 (VNWG…WLIV), 110–130 (LFFM…GFII), 134–154 (IFAI…SNYL), 165–185 (FSPF…AGII), 199–219 (IVFL…IILG), 249–269 (TWYW…PFTF), 289–309 (ISVF…TIGL), 321–341 (ISTI…VFVL), 360–380 (LFLF…GVML), 398–418 (FGLI…ITSL), and 440–460 (LGAY…LALL).

The protein localises to the cell membrane. This is an uncharacterized protein from Mesomycoplasma hyopneumoniae (strain J / ATCC 25934 / NCTC 10110) (Mycoplasma hyopneumoniae).